The chain runs to 285 residues: ATP phosphoribosyltransferase (285 aa).

It belongs to the ATP phosphoribosyltransferase family. Long subfamily. Requires Mg(2+) as cofactor.

The protein localises to the cytoplasm. It carries out the reaction 1-(5-phospho-beta-D-ribosyl)-ATP + diphosphate = 5-phospho-alpha-D-ribose 1-diphosphate + ATP. It participates in amino-acid biosynthesis; L-histidine biosynthesis; L-histidine from 5-phospho-alpha-D-ribose 1-diphosphate: step 1/9. Its activity is regulated as follows. Feedback inhibited by histidine. Functionally, catalyzes the condensation of ATP and 5-phosphoribose 1-diphosphate to form N'-(5'-phosphoribosyl)-ATP (PR-ATP). Has a crucial role in the pathway because the rate of histidine biosynthesis seems to be controlled primarily by regulation of HisG enzymatic activity. The polypeptide is ATP phosphoribosyltransferase (Sulfurisphaera tokodaii (strain DSM 16993 / JCM 10545 / NBRC 100140 / 7) (Sulfolobus tokodaii)).